The following is a 340-amino-acid chain: Mitochondrial import receptor subunit TOM40 homolog 2 (340 aa).

The interval 1 to 37 (MGNVMASTADAESSRGRGHLSAGLRLPEAPQYSGGVP) is disordered.

The protein belongs to the Tom40 family. In terms of assembly, forms part of the preprotein translocase of the outer mitochondrial membrane (TOM complex). Interacts with mitochondrial targeting sequences. In terms of tissue distribution, only expressed in the male germline, detected in primary spermatocytes as well as post-meiotic stages. Not detected in stem cells and spermatogonia near the tip of the testis.

It is found in the mitochondrion outer membrane. Its function is as follows. Channel-forming protein essential for import of protein precursors into mitochondria. This chain is Mitochondrial import receptor subunit TOM40 homolog 2, found in Drosophila melanogaster (Fruit fly).